Here is a 302-residue protein sequence, read N- to C-terminus: DDRGK domain-containing protein 1 (302 aa).

The chain crosses the membrane as a helical span at residues 1–21 (MDPLLLGSVGVLVLAVTLIIW). Residues 22–302 (RLLKLQWDEK…IRLETPSAAE (281 aa)) are Cytoplasmic-facing. Positions 101–178 (EYDEDGKKIG…EREEKERKEH (78 aa)) are disordered. Positions 118–178 (QAKEEKRQMR…EREEKERKEH (61 aa)) are enriched in basic and acidic residues.

This sequence belongs to the DDRGK1 family.

It is found in the endoplasmic reticulum membrane. Functionally, substrate adapter for ufmylation, the covalent attachment of the ubiquitin-like modifier ufm-1 to substrate proteins. This chain is DDRGK domain-containing protein 1, found in Caenorhabditis elegans.